Here is a 276-residue protein sequence, read N- to C-terminus: Rhomboid protease GlpG (276 aa).

The next 6 helical transmembrane spans lie at 94–114, 142–162, 169–189, 192–212, 229–249, and 250–270; these read GPVTWVMMIACVVVFIAMQIL, ALMHFSLMHILFNLLWWWYLG, LGSGKLIVITLISALLSGYVQ, FSGPWFGGLSGVVYALMGYVW, LIIFALIWIVAGWFDLFGMSM, and ANGAHIAGLAVGLAMAFVDSL. S201 acts as the Nucleophile in catalysis. H254 is a catalytic residue.

The protein belongs to the peptidase S54 family.

The protein resides in the cell inner membrane. It carries out the reaction Cleaves type-1 transmembrane domains using a catalytic dyad composed of serine and histidine that are contributed by different transmembrane domains.. Rhomboid-type serine protease that catalyzes intramembrane proteolysis. This Escherichia coli O157:H7 protein is Rhomboid protease GlpG.